The sequence spans 344 residues: Lysophosphatidic acid receptor 6 (344 aa).

The Extracellular portion of the chain corresponds to 1-19 (MVSVNSSHCFYNDSFKYTL). A glycan (N-linked (GlcNAc...) asparagine) is linked at Asn5. Residues 20–46 (YGCMFSMVFVLGLISNCVAIYIFICVL) traverse the membrane as a helical segment. Over 47–55 (KVRNETTTY) the chain is Cytoplasmic. A helical membrane pass occupies residues 56 to 79 (MINLAMSDLLFVFTLPFRIFYFTT). Residues 80–92 (RNWPFGDLLCKIS) are Extracellular-facing. Residues Cys89 and Cys168 are joined by a disulfide bond. The chain crosses the membrane as a helical span at residues 93–112 (VMLFYTNMYGSILFLTCISV). The Cytoplasmic portion of the chain corresponds to 113–133 (DRFLAIVYPFKSKTLRTKRNA). The chain crosses the membrane as a helical span at residues 134-154 (KIVCTGVWLTVIGGSAPAVFV). At 155-181 (QSTHSQGNNASEACFENFPEATWKTYL) the chain is on the extracellular side. The helical transmembrane segment at 182-209 (SRIVIFIEIVGFFIPLILNVTCSSMVLK) threads the bilayer. Residues 210–227 (TLTKPVTLSRSKINKTKV) lie on the Cytoplasmic side of the membrane. The chain crosses the membrane as a helical span at residues 228 to 253 (LKMIFVHLIIFCFCFVPYNINLILYS). Topologically, residues 254 to 272 (LVRTQTFVNCSVVAAVRTM) are extracellular. A helical transmembrane segment spans residues 273–292 (YPITLCIAVSNCCFDPIVYY). A lipid anchor (S-palmitoyl cysteine) is attached at Cys284. Over 293–344 (FTSDTIQNSIKMKNWSVRRSDFRFSEVHGAENFIQHNLQTLKSKIFDNESAA) the chain is Cytoplasmic.

This sequence belongs to the G-protein coupled receptor 1 family. As to expression, expressed ubiquitously, including in skin and hair follicle cells. Detected in both Henle's and Huxley's layers of the inner root sheath of the hair follicle and in suprabasal layers of the epidermis (at protein level). Expressed at low levels in peripheral blood leukocytes.

Its subcellular location is the cell membrane. Its function is as follows. Binds to oleoyl-L-alpha-lysophosphatidic acid (LPA). Intracellular cAMP is involved in the receptor activation. Important for the maintenance of hair growth and texture. The polypeptide is Lysophosphatidic acid receptor 6 (LPAR6) (Homo sapiens (Human)).